We begin with the raw amino-acid sequence, 694 residues long: Zinc finger BED domain-containing protein 5 (694 aa).

Residues 109 to 165 form a BED-type zinc finger; sequence RKYDESYLSFGFTYFGNRDAPHAQCVLCKKILSNSSLAPSKLRRHLETKHAAYKDKD. Cys-133, Cys-136, His-153, and His-158 together coordinate Zn(2+).

The polypeptide is Zinc finger BED domain-containing protein 5 (ZBED5) (Bos taurus (Bovine)).